We begin with the raw amino-acid sequence, 865 residues long: Probable alpha/beta-glucosidase ARB_02101 (865 aa).

A signal peptide spans 1 to 21 (MFGRTLALAAVFATTVLSAAA). N-linked (GlcNAc...) asparagine glycosylation is found at asparagine 101 and asparagine 299. Residue aspartate 428 is the Nucleophile of the active site. The active site involves glutamate 431. An N-linked (GlcNAc...) asparagine glycan is attached at asparagine 515. Residue aspartate 548 is the Proton donor of the active site. N-linked (GlcNAc...) asparagine glycans are attached at residues asparagine 549, asparagine 585, and asparagine 748.

Belongs to the glycosyl hydrolase 31 family.

It localises to the secreted. It carries out the reaction Hydrolysis of terminal, non-reducing (1-&gt;4)-linked alpha-D-glucose residues with release of alpha-D-glucose.. The catalysed reaction is Hydrolysis of terminal, non-reducing beta-D-glucosyl residues with release of beta-D-glucose.. Its function is as follows. Glucosidase involved in the degradation of cellulosic biomass. Has both alpha- and beta-glucosidase activity. In Arthroderma benhamiae (strain ATCC MYA-4681 / CBS 112371) (Trichophyton mentagrophytes), this protein is Probable alpha/beta-glucosidase ARB_02101.